The sequence spans 30 residues: Rothein 3.4 (30 aa).

Position 30 is a leucine amide (L30).

This sequence belongs to the frog skin active peptide (FSAP) family. Rothein subfamily. Expressed by the skin dorsal glands.

The protein resides in the secreted. Lacks antimicrobial activity. Does not inhibit the formation of NO by neuronal nitric oxide. This Litoria rothii (Roth's tree frog) protein is Rothein 3.4.